The following is a 358-amino-acid chain: Methylthioribose-1-phosphate isomerase (358 aa).

Substrate is bound by residues 54–56 (CGA) and Gln205. Asp246 (proton donor) is an active-site residue. Substrate is bound at residue 256–257 (NQ).

This sequence belongs to the eIF-2B alpha/beta/delta subunits family. MtnA subfamily.

It carries out the reaction 5-(methylsulfanyl)-alpha-D-ribose 1-phosphate = 5-(methylsulfanyl)-D-ribulose 1-phosphate. It functions in the pathway amino-acid biosynthesis; L-methionine biosynthesis via salvage pathway; L-methionine from S-methyl-5-thio-alpha-D-ribose 1-phosphate: step 1/6. In terms of biological role, catalyzes the interconversion of methylthioribose-1-phosphate (MTR-1-P) into methylthioribulose-1-phosphate (MTRu-1-P). This is Methylthioribose-1-phosphate isomerase from Pseudomonas fluorescens (strain ATCC BAA-477 / NRRL B-23932 / Pf-5).